The chain runs to 164 residues: Ribosome maturation factor RimP (164 aa).

Belongs to the RimP family.

It localises to the cytoplasm. Functionally, required for maturation of 30S ribosomal subunits. This Mycoplasma mycoides subsp. mycoides SC (strain CCUG 32753 / NCTC 10114 / PG1) protein is Ribosome maturation factor RimP.